A 289-amino-acid chain; its full sequence is Zinc finger matrin-type protein 3 (289 aa).

Matrin-type zinc fingers lie at residues 70 to 100 (LFCK…KLRN) and 147 to 177 (DYCK…RLRL). Disordered regions lie at residues 180–202 (AQSH…EGSE) and 265–289 (ESKQ…GYVQ). The Matrin-type 3 zinc finger occupies 245 to 275 (FYCSMCNVGAGEEVEFRQHLESKQHKSKVSE). Residues 265 to 282 (ESKQHKSKVSEQRYRSEM) show a composition bias toward basic and acidic residues.

As to quaternary structure, interacts with dsRNA. As to expression, highly expressed in brain, gut, lung, and testis.

It is found in the nucleus. Its subcellular location is the nucleolus. Acts as a bona fide target gene of p53/TP53. May play a role in the TP53-dependent growth regulatory pathway. May contribute to TP53-mediated apoptosis by regulation of TP53 expression and translocation to the nucleus and nucleolus. This chain is Zinc finger matrin-type protein 3, found in Rattus norvegicus (Rat).